A 73-amino-acid chain; its full sequence is Translation initiation factor IF-1 (73 aa).

The 72-residue stretch at 1 to 72 folds into the S1-like domain; that stretch reads MAKEDHIEMA…SKGRIIFRDK (72 aa).

It belongs to the IF-1 family. As to quaternary structure, component of the 30S ribosomal translation pre-initiation complex which assembles on the 30S ribosome in the order IF-2 and IF-3, IF-1 and N-formylmethionyl-tRNA(fMet); mRNA recruitment can occur at any time during PIC assembly.

It is found in the cytoplasm. One of the essential components for the initiation of protein synthesis. Stabilizes the binding of IF-2 and IF-3 on the 30S subunit to which N-formylmethionyl-tRNA(fMet) subsequently binds. Helps modulate mRNA selection, yielding the 30S pre-initiation complex (PIC). Upon addition of the 50S ribosomal subunit IF-1, IF-2 and IF-3 are released leaving the mature 70S translation initiation complex. The protein is Translation initiation factor IF-1 of Legionella pneumophila (strain Paris).